A 52-amino-acid polypeptide reads, in one-letter code: Light-harvesting protein B800/830/1020 alpha-1 chain (52 aa).

The Cytoplasmic portion of the chain corresponds to 1–12 (MWRIWKVFDPRR). Residues 13–33 (ILIATAIWLIIIALTIHVILM) form a helical membrane-spanning segment. An a bacteriochlorophyll-binding site is contributed by histidine 29. Residues 34-52 (TTERFNWLEGAPAAEYYSS) are Periplasmic-facing.

Belongs to the antenna complex alpha subunit family. As to quaternary structure, the core complex is formed by different alpha and beta chains, binding bacteriochlorophyll molecules, and arranged most probably in tetrameric structures disposed around the reaction center. The non-pigmented gamma chains may constitute additional components.

It localises to the cell inner membrane. Antenna complexes are light-harvesting systems, which transfer the excitation energy to the reaction centers. This is Light-harvesting protein B800/830/1020 alpha-1 chain from Halorhodospira halochloris (Ectothiorhodospira halochloris).